The primary structure comprises 149 residues: Arginine repressor (149 aa).

This sequence belongs to the ArgR family.

Its subcellular location is the cytoplasm. Its pathway is amino-acid biosynthesis; L-arginine biosynthesis [regulation]. In terms of biological role, regulates arginine biosynthesis genes. The chain is Arginine repressor from Geobacillus kaustophilus (strain HTA426).